A 121-amino-acid chain; its full sequence is Large ribosomal subunit protein bL20 (121 aa).

This sequence belongs to the bacterial ribosomal protein bL20 family.

In terms of biological role, binds directly to 23S ribosomal RNA and is necessary for the in vitro assembly process of the 50S ribosomal subunit. It is not involved in the protein synthesizing functions of that subunit. The protein is Large ribosomal subunit protein bL20 of Beijerinckia indica subsp. indica (strain ATCC 9039 / DSM 1715 / NCIMB 8712).